The sequence spans 471 residues: GDP-mannose transporter (471 aa).

Polar residues predominate over residues M1–E13. The interval M1 to R52 is disordered. Topologically, residues M1–A70 are cytoplasmic. Residues V71–V91 traverse the membrane as a helical segment. Topologically, residues V92–G101 are lumenal. The chain crosses the membrane as a helical span at residues F102–I122. Topologically, residues A123 to A139 are cytoplasmic. The helical transmembrane segment at W140–L160 threads the bilayer. The Lumenal portion of the chain corresponds to Q161–S166. N-linked (GlcNAc...) asparagine glycosylation is present at N164. A helical transmembrane segment spans residues V167–F187. Topologically, residues G188–R193 are cytoplasmic. A helical membrane pass occupies residues I194 to I214. Residues S215 to G279 lie on the Lumenal side of the membrane. The N-linked (GlcNAc...) asparagine glycan is linked to N222. The helical transmembrane segment at L280–L300 threads the bilayer. The Cytoplasmic segment spans residues L301–D315. Residues T316–E336 form a helical membrane-spanning segment. The Lumenal portion of the chain corresponds to D337–K354. A helical membrane pass occupies residues L355–W375. Residues C376–T383 are Cytoplasmic-facing. Residues T384–F404 form a helical membrane-spanning segment. The Lumenal portion of the chain corresponds to H405–P408. The helical transmembrane segment at V409 to F429 threads the bilayer. Residues G430 to D471 lie on the Cytoplasmic side of the membrane. Residues G442–S460 show a composition bias toward low complexity. Positions G442 to D471 are disordered.

This sequence belongs to the TPT transporter family. SLC35D subfamily. In terms of assembly, homooligomer.

The protein localises to the golgi apparatus membrane. It localises to the cytoplasmic vesicle membrane. The protein resides in the endoplasmic reticulum membrane. Its function is as follows. Involved in the import of GDP-mannose from the cytoplasm into the Golgi lumen. This is GDP-mannose transporter (VRG4) from Mycosarcoma maydis (Corn smut fungus).